The following is a 227-amino-acid chain: Uracil-DNA glycosylase (227 aa).

The active-site Proton acceptor is D64.

Belongs to the uracil-DNA glycosylase (UDG) superfamily. UNG family.

Its subcellular location is the cytoplasm. It carries out the reaction Hydrolyzes single-stranded DNA or mismatched double-stranded DNA and polynucleotides, releasing free uracil.. Excises uracil residues from the DNA which can arise as a result of misincorporation of dUMP residues by DNA polymerase or due to deamination of cytosine. The chain is Uracil-DNA glycosylase from Sodalis glossinidius (strain morsitans).